The following is a 466-amino-acid chain: ATP synthase subunit beta, sodium ion specific (466 aa).

153–160 (GGAGVGKT) provides a ligand contact to ATP.

Belongs to the ATPase alpha/beta chains family. In terms of assembly, F-type ATPases have 2 components, CF(1) - the catalytic core - and CF(0) - the membrane proton channel. CF(1) has five subunits: alpha(3), beta(3), gamma(1), delta(1), epsilon(1). CF(0) has three main subunits: a, b and c.

Its subcellular location is the cell membrane. The enzyme catalyses 4 Na(+)(in) + ATP + H2O = 4 Na(+)(out) + ADP + phosphate + H(+). Inhibited by nitrate. In terms of biological role, produces ATP from ADP in the presence of a sodium ion gradient across the membrane. The beta chain is the catalytic subunit. This is ATP synthase subunit beta, sodium ion specific from Acetobacterium woodii (strain ATCC 29683 / DSM 1030 / JCM 2381 / KCTC 1655 / WB1).